The primary structure comprises 483 residues: Proline--tRNA ligase (483 aa).

It belongs to the class-II aminoacyl-tRNA synthetase family. ProS type 3 subfamily. In terms of assembly, homodimer.

Its subcellular location is the cytoplasm. It catalyses the reaction tRNA(Pro) + L-proline + ATP = L-prolyl-tRNA(Pro) + AMP + diphosphate. Its function is as follows. Catalyzes the attachment of proline to tRNA(Pro) in a two-step reaction: proline is first activated by ATP to form Pro-AMP and then transferred to the acceptor end of tRNA(Pro). The sequence is that of Proline--tRNA ligase from Natranaerobius thermophilus (strain ATCC BAA-1301 / DSM 18059 / JW/NM-WN-LF).